A 448-amino-acid polypeptide reads, in one-letter code: Tubulin alpha-4A chain (448 aa).

The MREC motif signature appears at 1–4 (MREC). A GTP-binding site is contributed by Gln-11. Residue Lys-40 is modified to N6-acetyllysine. A Phosphoserine modification is found at Ser-48. GTP is bound at residue Glu-71. A Mg(2+)-binding site is contributed by Glu-71. Residue Tyr-83 is modified to 3'-nitrotyrosine. Positions 140, 144, 145, 179, 206, and 228 each coordinate GTP. Residue Glu-254 is part of the active site. Position 432 is a phosphotyrosine (Tyr-432). Position 439 is a phosphoserine (Ser-439).

Belongs to the tubulin family. Dimer of alpha and beta chains. A typical microtubule is a hollow water-filled tube with an outer diameter of 25 nm and an inner diameter of 15 nM. Alpha-beta heterodimers associate head-to-tail to form protofilaments running lengthwise along the microtubule wall with the beta-tubulin subunit facing the microtubule plus end conferring a structural polarity. Microtubules usually have 13 protofilaments but different protofilament numbers can be found in some organisms and specialized cells. Interacts with CFAP157. Mg(2+) serves as cofactor. Post-translationally, some glutamate residues at the C-terminus are polyglycylated, resulting in polyglycine chains on the gamma-carboxyl group. Glycylation is mainly limited to tubulin incorporated into axonemes (cilia and flagella) whereas glutamylation is prevalent in neuronal cells, centrioles, axonemes, and the mitotic spindle. Both modifications can coexist on the same protein on adjacent residues, and lowering polyglycylation levels increases polyglutamylation, and reciprocally. Cilia and flagella glycylation is required for their stability and maintenance. Flagella glycylation controls sperm motility. Some glutamate residues at the C-terminus are polyglutamylated, resulting in polyglutamate chains on the gamma-carboxyl group. Polyglutamylation plays a key role in microtubule severing by spastin (SPAST). SPAST preferentially recognizes and acts on microtubules decorated with short polyglutamate tails: severing activity by SPAST increases as the number of glutamates per tubulin rises from one to eight, but decreases beyond this glutamylation threshold. Glutamylation is also involved in cilia motility. In terms of processing, acetylation of alpha chains at Lys-40 is located inside the microtubule lumen. This modification has been correlated with increased microtubule stability, intracellular transport and ciliary assembly. Post-translationally, methylation of alpha chains at Lys-40 is found in mitotic microtubules and is required for normal mitosis and cytokinesis contributing to genomic stability. Although this tubulin does not encode a C-terminal tyrosine, a C-terminal tyrosine can be added post-translationally by the tubulin tyrosine ligase (TTL). It can then undergo a detyrosination cycle by the tubulin tyrosine carboxypeptidase (MATCAP1/KIAA0895L).

It localises to the cytoplasm. The protein resides in the cytoskeleton. The catalysed reaction is GTP + H2O = GDP + phosphate + H(+). Its function is as follows. Tubulin is the major constituent of microtubules, a cylinder consisting of laterally associated linear protofilaments composed of alpha- and beta-tubulin heterodimers. Microtubules grow by the addition of GTP-tubulin dimers to the microtubule end, where a stabilizing cap forms. Below the cap, tubulin dimers are in GDP-bound state, owing to GTPase activity of alpha-tubulin. The polypeptide is Tubulin alpha-4A chain (TUBA4A) (Macaca fascicularis (Crab-eating macaque)).